The sequence spans 1134 residues: Early transcription factor large subunit homolog (1134 aa).

The Helicase ATP-binding domain maps to 52–352 (KGGRAFFPCD…PNGQPLQRQQ (301 aa)). Residue 99–106 (WQTGTGKS) coordinates ATP. Positions 281–284 (DEIH) match the DEAH box motif. The 202-residue stretch at 524 to 725 (MMKDILSIIR…EGDKALRKHA (202 aa)) folds into the Helicase C-terminal domain.

Belongs to the DEAD box helicase family. DEAH subfamily.

It is found in the virion. It catalyses the reaction ATP + H2O = ADP + phosphate + H(+). Functionally, putative initation factor. This African swine fever virus (isolate Pig/Kenya/KEN-50/1950) (ASFV) protein is Early transcription factor large subunit homolog.